Here is a 258-residue protein sequence, read N- to C-terminus: Imidazole glycerol phosphate synthase subunit HisF (258 aa).

Residues D11 and D130 contribute to the active site.

It belongs to the HisA/HisF family. Heterodimer of HisH and HisF.

The protein resides in the cytoplasm. It carries out the reaction 5-[(5-phospho-1-deoxy-D-ribulos-1-ylimino)methylamino]-1-(5-phospho-beta-D-ribosyl)imidazole-4-carboxamide + L-glutamine = D-erythro-1-(imidazol-4-yl)glycerol 3-phosphate + 5-amino-1-(5-phospho-beta-D-ribosyl)imidazole-4-carboxamide + L-glutamate + H(+). Its pathway is amino-acid biosynthesis; L-histidine biosynthesis; L-histidine from 5-phospho-alpha-D-ribose 1-diphosphate: step 5/9. In terms of biological role, IGPS catalyzes the conversion of PRFAR and glutamine to IGP, AICAR and glutamate. The HisF subunit catalyzes the cyclization activity that produces IGP and AICAR from PRFAR using the ammonia provided by the HisH subunit. In Buchnera aphidicola subsp. Baizongia pistaciae (strain Bp), this protein is Imidazole glycerol phosphate synthase subunit HisF.